Here is a 472-residue protein sequence, read N- to C-terminus: 3-isopropylmalate dehydratase large subunit (472 aa).

[4Fe-4S] cluster-binding residues include Cys347, Cys407, and Cys410.

This sequence belongs to the aconitase/IPM isomerase family. LeuC type 1 subfamily. In terms of assembly, heterodimer of LeuC and LeuD. [4Fe-4S] cluster is required as a cofactor.

It carries out the reaction (2R,3S)-3-isopropylmalate = (2S)-2-isopropylmalate. The protein operates within amino-acid biosynthesis; L-leucine biosynthesis; L-leucine from 3-methyl-2-oxobutanoate: step 2/4. Catalyzes the isomerization between 2-isopropylmalate and 3-isopropylmalate, via the formation of 2-isopropylmaleate. This Bacillus licheniformis (strain ATCC 14580 / DSM 13 / JCM 2505 / CCUG 7422 / NBRC 12200 / NCIMB 9375 / NCTC 10341 / NRRL NRS-1264 / Gibson 46) protein is 3-isopropylmalate dehydratase large subunit.